The sequence spans 744 residues: MKRFFSNLFKRKQDQNSHIKQINGPTTSTPTTTPTTPTTPTTTQTPTPQNNNTNNNTNNNNNTNSNNSNQQKKEQAQASPSTNQTQTPSNNTISTSPTVTTQPSFTPGVISTSKLTTSPPESPRPPTSTTNTTQPSTTTTTATNSTNTNTASAPTKTASPSSPSATASPNNNSNNTTTTAATTTTTTTTTTTTNANQTASVNHTSSDQSLNAQNVTQTNNNNNNNNNNNNNNNANNTKPINPNDYIPLDFVDSTPKVDNNQPKRKASGPPEILPEEIDRTDFLGQGSFGSVYKGKCRGQEVAVKIPRKQKLSLYELTSFRHEVKIMSKIFHPNVVLFLGACTQSGKMQIVTELCQTDLEKLLHNDRTKKEFSLFRRMQMAKDAALGMNWLHGITRIVHNDLKTANLLVDINLRVKVTDFGFSQIKEGEEFQDKAAKGTPLWMAPEVMMGNPYNEKADVYSFGIILWEILTKEAPYSHHKDYDIFFNAICNEKERPPIPADTLPSLRHLIQTCWDHNPQNRPSFSEILFRLNEILIDCAIDFDDGRKYWKEHFLVPKQELQEEVEWSDFEKTLKATHKQLNLDYAPLKELLVQQSHQTVQKTKQVVTMERFDKVSKWFGSFFEPNTGIETIDNINKLSAKIWFHGDIVREQATSRLSKAAEGAFLIRLSSTEPKTCPFTLSMKNNQHRRIQLIDENNFTGFKIQGKTAVYNSLIELVEKCNDYPLLVPCPKFTQETFNPYDPYTN.

A disordered region spans residues 1–276 (MKRFFSNLFK…SGPPEILPEE (276 aa)). 3 stretches are compositionally biased toward low complexity: residues 25-70 (PTTS…NSNQ), 79-107 (SPSTNQTQTPSNNTISTSPTVTTQPSFTP), and 127-200 (TSTT…QTAS). A compositionally biased stretch (polar residues) spans 201 to 210 (VNHTSSDQSL). Over residues 211 to 236 (NAQNVTQTNNNNNNNNNNNNNNNANN) the composition is skewed to low complexity. One can recognise a Protein kinase domain in the interval 277–534 (IDRTDFLGQG…EILFRLNEIL (258 aa)). ATP-binding positions include 283 to 291 (LGQGSFGSV) and Lys304. Asp400 serves as the catalytic Proton acceptor. The SH2 domain maps to 641-734 (WFHGDIVREQ…LVPCPKFTQE (94 aa)).

This sequence belongs to the protein kinase superfamily. Ser/Thr protein kinase family. SH2 domain-containing protein kinase subfamily.

Its subcellular location is the membrane. The enzyme catalyses L-seryl-[protein] + ATP = O-phospho-L-seryl-[protein] + ADP + H(+). It catalyses the reaction L-threonyl-[protein] + ATP = O-phospho-L-threonyl-[protein] + ADP + H(+). Required for proper chemotaxis and phagocytosis; proper spatiotemporal control of F-actin levels in chemotaxing cells. Negative regulator of the PI3K (phosphatidylinositol 3 kinase) pathway. Predominantly phosphorylates serines and threonines and tyrosines at a lower level. In Dictyostelium discoideum (Social amoeba), this protein is Dual specificity protein kinase shkD (shkD).